The following is a 477-amino-acid chain: Transcription factor Sox-9-A (477 aa).

2 disordered regions span residues 1–66 and 157–274; these read MNLL…ETED and EAER…FRDV. A compositionally biased stretch (low complexity) spans 27-42; the sequence is SDDSAGSPCPSGSGSD. Composition is skewed to basic and acidic residues over residues 56–66 and 157–174; these read GDQELKKETED and EAER…DYKY. Residue K61 forms a Glycyl lysine isopeptide (Lys-Gly) (interchain with G-Cter in SUMO) linkage. A dimerization (DIM) region spans residues 63–103; sequence ETEDEKFPVCIREAVSQVLKGYDWTLVPMPVRVNGSSKNKP. The interval 63 to 103 is PQA; the sequence is ETEDEKFPVCIREAVSQVLKGYDWTLVPMPVRVNGSSKNKP. The HMG box DNA-binding region spans 105-173; that stretch reads VKRPMNAFMV…QHKKDHPDYK (69 aa). Residues 211-222 are compositionally biased toward low complexity; the sequence is SPHSSSSMSEVH. Residues 224–308 form a transactivation domain (TAM) region; sequence PGEHSGQSQG…LPPNGHPGVG (85 aa). 2 short sequence motifs (9aaTAD) span residues 276 to 285 and 291 to 299; these read IGELSSEVIS and DVNEFDQYL. The tract at residues 301 to 384 is disordered; sequence PNGHPGVGST…SDQQQQHSPQ (84 aa). Polar residues-rich tracts occupy residues 308–328 and 346–361; these read GSTQ…SATT and HSLS…SQQR. The interval 361-477 is transactivation domain (TAC); the sequence is RTHIKTEQLS…QPVYTQLTRP (117 aa). A Glycyl lysine isopeptide (Lys-Gly) (interchain with G-Cter in SUMO) cross-link involves residue K365. Over residues 370 to 384 the composition is skewed to low complexity; the sequence is SPSHYSDQQQQHSPQ. Residues 428–436 carry the 9aaTAD 3 motif; the sequence is SGLYSTFSY. The interval 446–477 is disordered; the sequence is TPIADTTGVPSIPQTHSPQHWEQPVYTQLTRP. Residues 453–477 show a composition bias toward polar residues; the sequence is GVPSIPQTHSPQHWEQPVYTQLTRP.

In terms of assembly, interacts with the sumoylation factors ube2i/ubc9 and sumo1. In terms of processing, sumoylated. Lys-365 is the major site of sumoylation, although sumoylation at Lys-61 also occurs. Sumoylation plays a key role in regulating formation of the neural crest and otic placode. From mid-gastrula (stage 10.5-11), expressed in a ring around the blastopore, with expression decreasing toward the dorsal side. At stage 12, expression around the blastopore decreases and begins to increase lateral to the neural plate in the presumptive neural crest, where expression dramatically increases around stage 14. Also expressed in the otic placode as early as stage 13/14. By the tailbud stage expression is restricted to the otic cup and then throughout the otic vesicle, with more intense staining at the dorsal-most region, the prospective region of the semicircular canals and endolymphatic duct. At the early tailbud stage (stage 23), expressed in migrating cranial neural crest cells and in the trunk neural crest. Also expressed in the genital ridges, developing eye, nasal placode and prospective pineal gland. Around stage 25, expression is down-regulated in the trunk neural crest but persists in the migrating cranial crest cells as they populate the pharyngeal arches, otic placode, developing eye, genital ridges and notochord. By stage 31, expression remains strong in the pharyngeal arches. Also expressed in the pancreas; first expressed at stage 25 in the pancreatic anlagen, dorsally in diverticulum. As development proceeds, expression continues in pancreatic tissue, being restricted to ventral and dorsal pancreatic buds.

It localises to the nucleus. Its subcellular location is the cytoplasm. Transcription factor that plays a key role in chondrocytes differentiation and skeletal development. Specifically binds the 5'-ACAAAG-3' DNA motif present in enhancers and super-enhancers and promotes expression of genes important for chondrogenesis, including COL2A1. Plays a central role in successive steps of chondrocyte differentiation. Absolutely required for precartilaginous condensation, the first step in chondrogenesis during which skeletal progenitors differentiate into prechondrocytes. Together with SOX5 and SOX6, required for overt chondrogenesis when condensed prechondrocytes differentiate into early stage chondrocytes, the second step in chondrogenesis. Later, required to direct hypertrophic maturation and block osteoblast differentiation of growth plate chondrocytes: maintains chondrocyte columnar proliferation, delays prehypertrophy and then prevents osteoblastic differentiation of chondrocytes. Also required for chondrocyte hypertrophy, both indirectly, by keeping the lineage fate of chondrocytes, and directly, by remaining present in upper hypertrophic cells. Low lipid levels are the main nutritional determinant for chondrogenic commitment of skeletal progenitor cells: when lipids levels are low, FOXO transcription factors promote expression of SOX9, which induces chondrogenic commitment and suppresses fatty acid oxidation. In addition to cartilage development, also acts as a regulator of proliferation and differentiation in epithelial stem/progenitor cells. Involved in development of the cranial neural crest, which is fated to form skeletal elements. Also required for otic placode specification during inner ear development. The chain is Transcription factor Sox-9-A (sox9-a) from Xenopus laevis (African clawed frog).